The chain runs to 59 residues: Photosystem II reaction center protein K (59 aa).

Positions 1-22 (MLNIFSLICLNSALYSSSFFFG) are excised as a propeptide. The chain crosses the membrane as a helical span at residues 30 to 50 (FLSPIVDFMPVIPLFFFLLAF).

PSII is composed of 1 copy each of membrane proteins PsbA, PsbB, PsbC, PsbD, PsbE, PsbF, PsbH, PsbI, PsbJ, PsbK, PsbL, PsbM, PsbT, PsbX, PsbY, PsbZ, Psb30/Ycf12, at least 3 peripheral proteins of the oxygen-evolving complex and a large number of cofactors. It forms dimeric complexes. This protein, PsbL and plastoquinone-9 are found in PSII dimers but not seen in PSII monomers.

Its subcellular location is the plastid. The protein localises to the chloroplast thylakoid membrane. In terms of biological role, one of the components of the core complex of photosystem II (PSII). PSII is a light-driven water:plastoquinone oxidoreductase that uses light energy to abstract electrons from H(2)O, generating O(2) and a proton gradient subsequently used for ATP formation. It consists of a core antenna complex that captures photons, and an electron transfer chain that converts photonic excitation into a charge separation. May be involved in PSII dimerization. Its function is as follows. One of the components of the core complex of photosystem II (PSII). PSII is a light-driven water:plastoquinone oxidoreductase that uses light energy to abstract electrons from H(2)O, generating O(2) and a proton gradient subsequently used for ATP formation. It consists of a core antenna complex that captures photons, and an electron transfer chain that converts photonic excitation into a charge separation. The chain is Photosystem II reaction center protein K from Spinacia oleracea (Spinach).